The sequence spans 163 residues: NADH-quinone oxidoreductase subunit I (163 aa).

4Fe-4S ferredoxin-type domains are found at residues 54–84 (LRRYPNGEERCIACKLCEAVCPANAITIESE) and 94–123 (IVYDIDLFKCIFCGFCEEACPVDAIVETQI). 8 residues coordinate [4Fe-4S] cluster: cysteine 64, cysteine 67, cysteine 70, cysteine 74, cysteine 103, cysteine 106, cysteine 109, and cysteine 113.

Belongs to the complex I 23 kDa subunit family. As to quaternary structure, NDH-1 is composed of 14 different subunits. Subunits NuoA, H, J, K, L, M, N constitute the membrane sector of the complex. [4Fe-4S] cluster is required as a cofactor.

It is found in the cell inner membrane. The catalysed reaction is a quinone + NADH + 5 H(+)(in) = a quinol + NAD(+) + 4 H(+)(out). In terms of biological role, NDH-1 shuttles electrons from NADH, via FMN and iron-sulfur (Fe-S) centers, to quinones in the respiratory chain. The immediate electron acceptor for the enzyme in this species is believed to be ubiquinone. Couples the redox reaction to proton translocation (for every two electrons transferred, four hydrogen ions are translocated across the cytoplasmic membrane), and thus conserves the redox energy in a proton gradient. The protein is NADH-quinone oxidoreductase subunit I of Ruthia magnifica subsp. Calyptogena magnifica.